We begin with the raw amino-acid sequence, 660 residues long: Bifunctional polymyxin resistance protein ArnA (660 aa).

The segment at 1–304 (MKAVVFAYHD…TLGLVEGSRL (304 aa)) is formyltransferase ArnAFT. The Proton donor; for formyltransferase activity role is filled by His-104. (6R)-10-formyltetrahydrofolate-binding positions include Arg-114 and 136 to 140 (VAKAD). The tract at residues 314–660 (RRTRVLILGV…RTVDIVEKSS (347 aa)) is dehydrogenase ArnADH. Residues Asp-347 and 368 to 369 (DI) contribute to the NAD(+) site. Residues Ala-393, Tyr-398, and 432 to 433 (TS) contribute to the UDP-alpha-D-glucuronate site. Glu-434 (proton acceptor; for decarboxylase activity) is an active-site residue. UDP-alpha-D-glucuronate contacts are provided by residues Arg-460, Asn-492, 526-535 (KLIDGGKQKR), and Tyr-613. Residue Arg-619 is the Proton donor; for decarboxylase activity of the active site.

In the N-terminal section; belongs to the Fmt family. UDP-L-Ara4N formyltransferase subfamily. It in the C-terminal section; belongs to the NAD(P)-dependent epimerase/dehydratase family. UDP-glucuronic acid decarboxylase subfamily. Homohexamer, formed by a dimer of trimers.

The catalysed reaction is UDP-alpha-D-glucuronate + NAD(+) = UDP-beta-L-threo-pentopyranos-4-ulose + CO2 + NADH. It catalyses the reaction UDP-4-amino-4-deoxy-beta-L-arabinose + (6R)-10-formyltetrahydrofolate = UDP-4-deoxy-4-formamido-beta-L-arabinose + (6S)-5,6,7,8-tetrahydrofolate + H(+). Its pathway is nucleotide-sugar biosynthesis; UDP-4-deoxy-4-formamido-beta-L-arabinose biosynthesis; UDP-4-deoxy-4-formamido-beta-L-arabinose from UDP-alpha-D-glucuronate: step 1/3. The protein operates within nucleotide-sugar biosynthesis; UDP-4-deoxy-4-formamido-beta-L-arabinose biosynthesis; UDP-4-deoxy-4-formamido-beta-L-arabinose from UDP-alpha-D-glucuronate: step 3/3. It functions in the pathway bacterial outer membrane biogenesis; lipopolysaccharide biosynthesis. Bifunctional enzyme that catalyzes the oxidative decarboxylation of UDP-glucuronic acid (UDP-GlcUA) to UDP-4-keto-arabinose (UDP-Ara4O) and the addition of a formyl group to UDP-4-amino-4-deoxy-L-arabinose (UDP-L-Ara4N) to form UDP-L-4-formamido-arabinose (UDP-L-Ara4FN). The modified arabinose is attached to lipid A and is required for resistance to polymyxin and cationic antimicrobial peptides. The protein is Bifunctional polymyxin resistance protein ArnA of Escherichia fergusonii (strain ATCC 35469 / DSM 13698 / CCUG 18766 / IAM 14443 / JCM 21226 / LMG 7866 / NBRC 102419 / NCTC 12128 / CDC 0568-73).